Consider the following 132-residue polypeptide: Small ribosomal subunit protein uS8 (132 aa).

Belongs to the universal ribosomal protein uS8 family. As to quaternary structure, part of the 30S ribosomal subunit. Contacts proteins S5 and S12.

Functionally, one of the primary rRNA binding proteins, it binds directly to 16S rRNA central domain where it helps coordinate assembly of the platform of the 30S subunit. The chain is Small ribosomal subunit protein uS8 from Bacillus pumilus (strain SAFR-032).